The chain runs to 406 residues: Paracaspase (406 aa).

The tract at residues 193–374 (IGNSKYSQHR…TERKNNNIST (182 aa)) is caspase-like. Residues histidine 266 and cysteine 311 contribute to the active site.

It belongs to the peptidase C14B family.

Not required for DIF-induced autophagic cell death and necrotic cell death. The sequence is that of Paracaspase (pcp) from Dictyostelium discoideum (Social amoeba).